Consider the following 122-residue polypeptide: Holo-[acyl-carrier-protein] synthase (122 aa).

2 residues coordinate Mg(2+): aspartate 8 and glutamate 56.

Belongs to the P-Pant transferase superfamily. AcpS family. Mg(2+) serves as cofactor.

The protein localises to the cytoplasm. The enzyme catalyses apo-[ACP] + CoA = holo-[ACP] + adenosine 3',5'-bisphosphate + H(+). Its function is as follows. Transfers the 4'-phosphopantetheine moiety from coenzyme A to a Ser of acyl-carrier-protein. The protein is Holo-[acyl-carrier-protein] synthase of Alkaliphilus oremlandii (strain OhILAs) (Clostridium oremlandii (strain OhILAs)).